A 92-amino-acid polypeptide reads, in one-letter code: Cell division topological specificity factor (92 aa).

It belongs to the MinE family.

In terms of biological role, prevents the cell division inhibition by proteins MinC and MinD at internal division sites while permitting inhibition at polar sites. This ensures cell division at the proper site by restricting the formation of a division septum at the midpoint of the long axis of the cell. In Colwellia psychrerythraea (strain 34H / ATCC BAA-681) (Vibrio psychroerythus), this protein is Cell division topological specificity factor.